The chain runs to 89 residues: MTLLASISSIGNVKSISKSNNFSSLSNSSLQSSNSIQCGGCGGGSPLIGTVGNLVGGVLVGTGIIVGTVVGTVNGVVGGLLSGPNCGCH.

The protein belongs to the hssA/B family.

This Dictyostelium discoideum (Social amoeba) protein is HssA/B-like protein 16 (hssl16).